Consider the following 84-residue polypeptide: Large ribosomal subunit protein bL27 (84 aa).

The interval 1–24 (MAHKKGAASTKNGRDSNSQRLGVK) is disordered. Positions 9-20 (STKNGRDSNSQR) are enriched in polar residues.

This sequence belongs to the bacterial ribosomal protein bL27 family.

The sequence is that of Large ribosomal subunit protein bL27 from Nocardioides sp. (strain ATCC BAA-499 / JS614).